The chain runs to 247 residues: Homeobox-leucine zipper protein HOX17 (247 aa).

Residues 58–81 are disordered; the sequence is ERAGLRGGGGSDEEDGGCGIDGSR. Positions 79–138 form a DNA-binding region, homeobox; the sequence is GSRKKLRLSKDQSAVLEDSFREHPTLNPRQKATLAQQLGLRPRQVEVWFQNRRARTKLKQ. Residues 137–182 are leucine-zipper; it reads KQTEVDCEFLKRCCETLTEENRRLQKEVQELRALKLVSPHLYMNMS.

It belongs to the HD-ZIP homeobox family. Class II subfamily. Expressed in seedlings, roots, stems, leaf sheaths and blades and panicles.

The protein resides in the nucleus. Its function is as follows. Probable transcription factor. The chain is Homeobox-leucine zipper protein HOX17 (HOX17) from Oryza sativa subsp. japonica (Rice).